The chain runs to 868 residues: Translation initiation factor IF-2 (868 aa).

The segment at 201 to 269 is disordered; it reads KEEVKPEKVS…GTEKSDKYRE (69 aa). The segment covering 249–260 has biased composition (basic residues); it reads RGGRSKFKKKKG. Residues 368–537 enclose the tr-type G domain; sequence GRAPVVTIMG…LLQSEVLELK (170 aa). The interval 377 to 384 is G1; the sequence is GHVDHGKT. 377 to 384 contacts GTP; the sequence is GHVDHGKT. Residues 402-406 are G2; sequence GITQH. Residues 423–426 are G3; it reads DTPG. GTP-binding positions include 423-427 and 477-480; these read DTPGH and NKMD. The segment at 477–480 is G4; sequence NKMD. The interval 513–515 is G5; the sequence is SAK.

Belongs to the TRAFAC class translation factor GTPase superfamily. Classic translation factor GTPase family. IF-2 subfamily.

It is found in the cytoplasm. Its function is as follows. One of the essential components for the initiation of protein synthesis. Protects formylmethionyl-tRNA from spontaneous hydrolysis and promotes its binding to the 30S ribosomal subunits. Also involved in the hydrolysis of GTP during the formation of the 70S ribosomal complex. The chain is Translation initiation factor IF-2 from Legionella pneumophila (strain Corby).